A 637-amino-acid chain; its full sequence is Acetolactate synthase 2, chloroplastic (637 aa).

The transit peptide at 1–73 (MASFSFFGTI…SSKYAPNVPR (73 aa)) directs the protein to the chloroplast. A disordered region spans residues 35–69 (RRATRVSVSANSKKDQDRTASRRENPSTFSSKYAP). Over residues 46-59 (SKKDQDRTASRREN) the composition is skewed to basic and acidic residues. Glu-120 serves as a coordination point for thiamine diphosphate. FAD-binding positions include Arg-222, 329-350 (HGTVYANYAVEYSDLLLAFGVR), and 372-391 (DIDSTEIGKNKTPHVSVCCD). The thiamine pyrophosphate binding stretch occupies residues 462–542 (QHQMWAAQFY…VKVLLINNQH (81 aa)). Mg(2+) is bound by residues Asp-513 and Asn-540.

Belongs to the TPP enzyme family. Requires Mg(2+) as cofactor. Thiamine diphosphate is required as a cofactor.

Its subcellular location is the plastid. The protein localises to the chloroplast. The catalysed reaction is 2 pyruvate + H(+) = (2S)-2-acetolactate + CO2. The protein operates within amino-acid biosynthesis; L-isoleucine biosynthesis; L-isoleucine from 2-oxobutanoate: step 1/4. Its pathway is amino-acid biosynthesis; L-valine biosynthesis; L-valine from pyruvate: step 1/4. The sequence is that of Acetolactate synthase 2, chloroplastic from Brassica napus (Rape).